Here is a 156-residue protein sequence, read N- to C-terminus: Small ribosomal subunit protein uS7 (156 aa).

Belongs to the universal ribosomal protein uS7 family. As to quaternary structure, part of the 30S ribosomal subunit. Contacts proteins S9 and S11.

In terms of biological role, one of the primary rRNA binding proteins, it binds directly to 16S rRNA where it nucleates assembly of the head domain of the 30S subunit. Is located at the subunit interface close to the decoding center, probably blocks exit of the E-site tRNA. The chain is Small ribosomal subunit protein uS7 from Ruegeria pomeroyi (strain ATCC 700808 / DSM 15171 / DSS-3) (Silicibacter pomeroyi).